The chain runs to 194 residues: Calcium channel flower (194 aa).

3 helical membrane-spanning segments follow: residues Leu-35–Ile-55, Ile-66–Glu-88, and Ala-113–Phe-133.

The protein belongs to the calcium channel flower family. As to quaternary structure, homomultimer. Associates with the dally/ magu complex.

Its subcellular location is the cytoplasmic vesicle. The protein resides in the secretory vesicle. It localises to the synaptic vesicle membrane. The protein localises to the presynaptic cell membrane. It is found in the endosome. Channel activity is inhibited by La(3+), which reduces Ca(2+) influx and thus inhibits it's function in promoting activity-dependent bulk endocytosis (ADBE) in response to high stimuli. In terms of biological role, transmembrane protein which mediates synaptic endocytosis, fitness-based cell culling, neuronal culling, morphogen gradient scaling, and calcium transport. Regulates synaptic endocytosis and hence couples exo- with endocytosis. Controls two major modes of synaptic vesicle (SV) endocytosis in the synaptic boutons of neuromuscular junctions (NMJs); Ca(2+) channel-independent Clathrin-mediated endocytosis (CME) in response to mild stimulation, and Ca(2+) channel-dependent activity-dependent bulk endocytosis (ADBE) in response to strong stimulation. Functions in ADBE and subsequent SV reformation from bulk endosomes by initiating Ca(2+) channel-dependent phosphatidylinositol 4,5-bisphosphate (PtdIns(4,5)P2) compartmentalization in synaptic boutons. There it acts at the periactive zone to provide the low Ca(2+) levels required to initiate Calcineurin activation and upregulate PtdIns(4,5)P2. Conversely PtdIns(4,5)P2 enhances fwe Ca(2+) channel-activity, establishing a positive feedback loop that induces PtdIns(4,5)P2 microdomain at the periactive zone. These microdomains trigger bulk membrane invagination (i.e. ADBE) by triggering actin polymerization while also promoting localization of fwe to bulk endosomes, thereby removing the ADBE trigger to reduce endocytosis and prevent excess membrane uptake. PtdIns(4,5)P2 then promotes SV reformation from the bulk endosomes, to coordinate ADBE and subsequent SV reformation. Different combinations of the flower isoforms at the cell membrane are also required for the identification and elimination of suboptimal or supernumerary cells during development, regeneration, and adulthood. Required for the recognition and elimination of unfit cells in the developing wing during cell competition. In the developing pupal retina, mediates the elimination of unwanted postmitotic neurons, including supernumerary photoreceptor neurons that form at the periphery of the retina and are contained within incomplete ommatidia units. Also required for efficient elimination and replacement of old neurons by newly generated neurons during regeneration in the adult brain following mechanical injury. Downstream of the flower fitness fingerprints, cells identified as unwanted or unfit are eliminated via apoptosis through the expression of ahuizotl (azot). However, the cells marked for elimination by the flower isoforms only undergo apoptosis if additional thresholds are met; (1) their neighboring fit/healthy cells express different levels of the fwe isoforms, and (2) the levels of the protective signal SPARC expressed by the loser or unwanted cells are unable to inhibit caspase activation. These additional thresholds for flower-mediated apoptosis, allows useful cells to recover from transient and limited stress before they are unnecessarily eliminated. Functions with dally and magu in a mechanism of scaling, which utilises apoptosis to ensure that the dpp morphogen gradient, which mediates organ growth, remains proportional to the size of the growing wing. In this mechanism, fwe represses dally- and Magu-dependent activity in expanding the gradient, and dally/Magu inhibits fwe-dependent apoptosis to keep cell death rate low. When the levels of these different proteins are optimally regulated the gradient correctly scales with organ growth but when this fails, fwe-mediated apoptosis is activated to trim the developing tissue to match the correct size of the gradient. This Drosophila yakuba (Fruit fly) protein is Calcium channel flower.